The following is a 254-amino-acid chain: Peptide methionine sulfoxide reductase A5 (254 aa).

An N-terminal signal peptide occupies residues 1-33 (MAISLKRNRFFIPYTNLVFFFFLCVSLLDKTVS).

Belongs to the MsrA Met sulfoxide reductase family.

It catalyses the reaction L-methionyl-[protein] + [thioredoxin]-disulfide + H2O = L-methionyl-(S)-S-oxide-[protein] + [thioredoxin]-dithiol. It carries out the reaction [thioredoxin]-disulfide + L-methionine + H2O = L-methionine (S)-S-oxide + [thioredoxin]-dithiol. Its function is as follows. Catalyzes the reduction of methionine sulfoxide (MetSO) to methionine in proteins. Plays a protective role against oxidative stress by restoring activity to proteins that have been inactivated by methionine oxidation. MSRA family specifically reduces the MetSO S-enantiomer. This chain is Peptide methionine sulfoxide reductase A5 (MSRA5), found in Arabidopsis thaliana (Mouse-ear cress).